Consider the following 442-residue polypeptide: MSCKININEIDPSVLSKLKSKAVLKIDNNGKPDNVILTRLINETAYIPFSMAKNFNLSIPLRNKFPAISTKFKGELRDNQMIVRREAIDILEKNHSVIISCFTGFGKTIGAINLACKLRLKTLIIVTRVVLMNQWKESILKFCESENKTIPIVEIISSNSKDEYVMCNFAIINAINIPKMEQGFLESFGTVIVDEVHLVMARKTFRSLLYVTPRYLIALSATSYRSDGLDALFPIFFGKEKIIRELNRKHVIYRVDTLFKPQVKYGINGKMDWNALLEDQASNENRNKLIVQVVKNNPERTFLILVKRIKQGEWLAKEIEKECFNRVDHLLNNLSIDDEQKEPKHVATLFGSNQKFDKNCKVLIGTSAKIGTGFDFDKLDTLLLAADVVEYYIQFIGRIMRKDDVNPIIFDLVDNNKTLQKHYSERLKVYKKHGGIVKNYKL.

Residues 88–241 (IDILEKNHSV…LFPIFFGKEK (154 aa)) enclose the Helicase ATP-binding domain. 101–108 (CFTGFGKT) serves as a coordination point for ATP. A DEAH box motif is present at residues 194-197 (DEVH).

Belongs to the DEAD box helicase family. DEAH subfamily.

The protein is Putative helicase 161L of Invertebrate iridescent virus 6 (IIV-6).